We begin with the raw amino-acid sequence, 527 residues long: Zinc finger protein 35 (527 aa).

The tract at residues 9–221 is globular domain; sequence MALAPWGPVK…NPKTQLGQKP (213 aa). Positions 16–38 are disordered; it reads PVKVKKEEEEEENFPGQASSQQV. Residues Lys-20, Lys-21, Lys-99, Lys-117, Lys-125, Lys-144, Lys-158, Lys-189, and Lys-214 each participate in a glycyl lysine isopeptide (Lys-Gly) (interchain with G-Cter in SUMO2) cross-link. C2H2-type zinc fingers lie at residues 222-244 and 250-272; these read FTCS…QRIH and FECH…QRIH. Lys-276 is covalently cross-linked (Glycyl lysine isopeptide (Lys-Gly) (interchain with G-Cter in SUMO2)). C2H2-type zinc fingers lie at residues 278–300, 306–328, 334–356, 362–384, 390–412, 418–440, 446–468, 474–496, and 502–524; these read YVCS…QKIH, FKCN…QKVH, YECN…QRIH, FACN…QRSH, YECK…QRIH, YDCS…QRIH, YVCN…QRIH, YTCN…QRTH, and YECE…HRTH.

This sequence belongs to the krueppel C2H2-type zinc-finger protein family.

The protein localises to the nucleus. May be involved in transcriptional regulation. Involved in cell differentiation and/or proliferation. In Homo sapiens (Human), this protein is Zinc finger protein 35 (ZNF35).